The chain runs to 185 residues: Peptidoglycan-recognition protein SC1a/b (185 aa).

An N-terminal signal peptide occupies residues 1-21; sequence MVSKVALLLAVLVCSQYMAQG. Residues 46-170 form the N-acetylmuramoyl-L-alanine amidase domain; that stretch reads SYAIIHHTAG…RQVSATECPG (125 aa). H51 is a binding site for Zn(2+). C58 and C64 are oxidised to a cystine. Zn(2+) contacts are provided by H160 and C168.

It belongs to the N-acetylmuramoyl-L-alanine amidase 2 family. Requires Zn(2+) as cofactor.

Its subcellular location is the secreted. It catalyses the reaction Hydrolyzes the link between N-acetylmuramoyl residues and L-amino acid residues in certain cell-wall glycopeptides.. Functionally, N-acetylmuramyl-L-alanine amidase involved in innate immunity by degrading bacterial peptidoglycans (PGN). Plays a scavenger role by digesting biologically active PGN into biologically inactive fragments. Has no direct bacteriolytic activity. This chain is Peptidoglycan-recognition protein SC1a/b (PGRP-SC1a), found in Drosophila simulans (Fruit fly).